The sequence spans 597 residues: Large ribosomal subunit assembly factor BipA (597 aa).

One can recognise a tr-type G domain in the interval 3–198; it reads LPIRNVAIIA…AILHHVPPPA (196 aa). GTP contacts are provided by residues 15-20 and 128-131; these read DHGKTT and NKID.

The protein belongs to the TRAFAC class translation factor GTPase superfamily. Classic translation factor GTPase family. BipA subfamily. As to quaternary structure, monomer.

The protein resides in the cytoplasm. The catalysed reaction is GTP + H2O = GDP + phosphate + H(+). In terms of biological role, a 50S ribosomal subunit assembly protein with GTPase activity, required for 50S subunit assembly at low temperatures, may also play a role in translation. Binds GTP and analogs. Binds the 70S ribosome between the 30S and 50S subunits, in a similar position as ribosome-bound EF-G; it contacts a number of ribosomal proteins, both rRNAs and the A-site tRNA. In Synechocystis sp. (strain ATCC 27184 / PCC 6803 / Kazusa), this protein is Large ribosomal subunit assembly factor BipA.